The sequence spans 217 residues: MPELTEIKSEAAPSTSAEAKPEDVRVEDDGSDSDSDGGMPGLEEAVAATTQLGGGATGLPIDLVSKAKQSRGEKKARKIMLKLGLKQIQGVNRVTIRKSKNILFVINNPDVYKNPHSDTYIVFGEAKIEDLSQQAQVAAAEKFKAPEAAGAADSVGATTSVAPIAEEDEEDVDDTGVDEKDIELVITQANTTRAKAIKALKNNNNDIVNAIMELTML.

The segment at 1 to 45 is disordered; that stretch reads MPELTEIKSEAAPSTSAEAKPEDVRVEDDGSDSDSDGGMPGLEEA. The segment covering 19–28 has biased composition (basic and acidic residues); the sequence is AKPEDVRVED. Residues 70 to 135 form the NAC-A/B domain; the sequence is SRGEKKARKI…AKIEDLSQQA (66 aa). A disordered region spans residues 154–177; it reads SVGATTSVAPIAEEDEEDVDDTGV. The span at 165–176 shows a compositional bias: acidic residues; that stretch reads AEEDEEDVDDTG. The UBA domain occupies 177–217; that stretch reads VDEKDIELVITQANTTRAKAIKALKNNNNDIVNAIMELTML.

Belongs to the NAC-alpha family. As to quaternary structure, part of the nascent polypeptide-associated complex (NAC), consisting of Nac-alpha and bicaudal (bic).

In terms of biological role, may promote appropriate targeting of ribosome-nascent polypeptide complexes. Required for correct localization of the osk/oskar protein to the posterior pole during embryonic development. The osk protein directs the recruitment of molecules responsible for posterior body patterning and germline formation in the embryo. The chain is Nascent polypeptide-associated complex subunit alpha (Nacalpha) from Drosophila melanogaster (Fruit fly).